The following is a 169-amino-acid chain: Crossover junction endodeoxyribonuclease RuvC (169 aa).

Residues aspartate 11, glutamate 71, and aspartate 143 contribute to the active site. Aspartate 11, glutamate 71, and aspartate 143 together coordinate Mg(2+).

This sequence belongs to the RuvC family. In terms of assembly, homodimer which binds Holliday junction (HJ) DNA. The HJ becomes 2-fold symmetrical on binding to RuvC with unstacked arms; it has a different conformation from HJ DNA in complex with RuvA. In the full resolvosome a probable DNA-RuvA(4)-RuvB(12)-RuvC(2) complex forms which resolves the HJ. It depends on Mg(2+) as a cofactor.

Its subcellular location is the cytoplasm. It catalyses the reaction Endonucleolytic cleavage at a junction such as a reciprocal single-stranded crossover between two homologous DNA duplexes (Holliday junction).. Functionally, the RuvA-RuvB-RuvC complex processes Holliday junction (HJ) DNA during genetic recombination and DNA repair. Endonuclease that resolves HJ intermediates. Cleaves cruciform DNA by making single-stranded nicks across the HJ at symmetrical positions within the homologous arms, yielding a 5'-phosphate and a 3'-hydroxyl group; requires a central core of homology in the junction. The consensus cleavage sequence is 5'-(A/T)TT(C/G)-3'. Cleavage occurs on the 3'-side of the TT dinucleotide at the point of strand exchange. HJ branch migration catalyzed by RuvA-RuvB allows RuvC to scan DNA until it finds its consensus sequence, where it cleaves and resolves the cruciform DNA. This is Crossover junction endodeoxyribonuclease RuvC from Rhizobium leguminosarum bv. trifolii (strain WSM2304).